The following is a 219-amino-acid chain: Peptide methionine sulfoxide reductase MsrA (219 aa).

The tract at residues 1 to 20 (MGLFRSPRQNLPTAADALPG) is disordered. C55 is a catalytic residue.

Belongs to the MsrA Met sulfoxide reductase family.

It catalyses the reaction L-methionyl-[protein] + [thioredoxin]-disulfide + H2O = L-methionyl-(S)-S-oxide-[protein] + [thioredoxin]-dithiol. It carries out the reaction [thioredoxin]-disulfide + L-methionine + H2O = L-methionine (S)-S-oxide + [thioredoxin]-dithiol. In terms of biological role, has an important function as a repair enzyme for proteins that have been inactivated by oxidation. Catalyzes the reversible oxidation-reduction of methionine sulfoxide in proteins to methionine. This chain is Peptide methionine sulfoxide reductase MsrA, found in Rhodospirillum centenum (strain ATCC 51521 / SW).